The chain runs to 242 residues: Coiled-coil domain-containing protein 107 (242 aa).

The first 24 residues, 1–24 (MEGAGPVLSILGLLLVSAPFGVLG), serve as a signal peptide directing secretion. The tract at residues 27 to 62 (PSADLGAHPERGSQVSPGTTEPRRQPPPKDQRERAR) is disordered. The segment covering 47–62 (EPRRQPPPKDQRERAR) has biased composition (basic and acidic residues). The helical transmembrane segment at 65–85 (SLSLGALYTAAVVAFVLFKCL) threads the bilayer. Residues 97–132 (EKNKKKSSQSEQQLVQLTQQLAQTEQHLNHLMTQLD) are a coiled coil. Residues 186–210 (KEDQEAGNSQAWEEPITWSPETRNL) form a disordered region.

It localises to the membrane. In Mus musculus (Mouse), this protein is Coiled-coil domain-containing protein 107 (Ccdc107).